The chain runs to 318 residues: Olfactory receptor 5G25 (318 aa).

Residues 1–25 (MMHRNQTVVTEFFFTGLTSSFHLQI) lie on the Extracellular side of the membrane. An N-linked (GlcNAc...) asparagine glycan is attached at Asn5. The chain crosses the membrane as a helical span at residues 26 to 46 (VLFLTFLCVYLATLLGNLGMI). Over 47-54 (ILIHQDTR) the chain is Cytoplasmic. A helical transmembrane segment spans residues 55–75 (LHIPMYFFLSHLSFVDACSSS). Over 76–99 (VISPKMLSDIFVDKKVISFLGCAI) the chain is Extracellular. Residues Cys97 and Cys189 are joined by a disulfide bond. Residues 100-120 (QFCLFSQFVVTECFLLASMAY) traverse the membrane as a helical segment. The Cytoplasmic segment spans residues 121 to 133 (DRYVAICKPLLYT). Residues 134-154 (LIMSQRVCVQLVIGPYSIGLI) form a helical membrane-spanning segment. At 155 to 196 (STVVHTTSAFILPYCGPNLINHFFCDLLPVLSLACADTQMNK) the chain is on the extracellular side. The chain crosses the membrane as a helical span at residues 197–217 (HLLFIMAGILGVFSGIIILVS). Residues 218 to 237 (YVYIAITILKINSADGRRKA) are Cytoplasmic-facing. Residues 238–258 (FSTCSSHLTAVSILYGTLFFI) form a helical membrane-spanning segment. Residues 259 to 271 (YVRPSSSFSLDIN) are Extracellular-facing. A helical membrane pass occupies residues 272-292 (KVVSLFYTAVIPMLNPFIYSL). Residues 293 to 318 (RNKEVKDALIRTFEKKFCYSLQDKIL) lie on the Cytoplasmic side of the membrane.

Belongs to the G-protein coupled receptor 1 family.

It is found in the cell membrane. Functionally, potential odorant receptor. This is Olfactory receptor 5G25 from Mus musculus (Mouse).